A 569-amino-acid chain; its full sequence is CTP synthase (569 aa).

The region spanning 313–569 is the Glutamine amidotransferase type-1 domain; sequence RIAMVGKYTG…NASLERLKKM (257 aa). Residue Cys-410 is the Nucleophile of the active site. Catalysis depends on residues His-541 and Glu-543.

It belongs to the CTP synthase family.

The enzyme catalyses UTP + L-glutamine + ATP + H2O = CTP + L-glutamate + ADP + phosphate + 2 H(+). It participates in pyrimidine metabolism; CTP biosynthesis via de novo pathway; CTP from UDP: step 2/2. In terms of biological role, catalyzes the ATP-dependent amination of UTP to CTP with either L-glutamine or ammonia as the source of nitrogen. This chain is CTP synthase (ctps), found in Dictyostelium discoideum (Social amoeba).